Reading from the N-terminus, the 296-residue chain is tRNA dimethylallyltransferase (296 aa).

2 to 9 (GPTASGKT) lines the ATP pocket. Position 4-9 (4-9 (TASGKT)) interacts with substrate. Interaction with substrate tRNA regions lie at residues 27–30 (DSAL), 151–155 (QRLSR), and 232–237 (RCVGYR).

The protein belongs to the IPP transferase family. Monomer. Mg(2+) is required as a cofactor.

The catalysed reaction is adenosine(37) in tRNA + dimethylallyl diphosphate = N(6)-dimethylallyladenosine(37) in tRNA + diphosphate. Functionally, catalyzes the transfer of a dimethylallyl group onto the adenine at position 37 in tRNAs that read codons beginning with uridine, leading to the formation of N6-(dimethylallyl)adenosine (i(6)A). This is tRNA dimethylallyltransferase from Shewanella sp. (strain MR-7).